Reading from the N-terminus, the 422-residue chain is Glutamyl-tRNA reductase (422 aa).

Substrate-binding positions include 49–52 (TCNR), S107, 112–114 (EPQ), and Q118. The Nucleophile role is filled by C50. 187–192 (GAGETI) serves as a coordination point for NADP(+).

The protein belongs to the glutamyl-tRNA reductase family. As to quaternary structure, homodimer.

It carries out the reaction (S)-4-amino-5-oxopentanoate + tRNA(Glu) + NADP(+) = L-glutamyl-tRNA(Glu) + NADPH + H(+). The protein operates within porphyrin-containing compound metabolism; protoporphyrin-IX biosynthesis; 5-aminolevulinate from L-glutamyl-tRNA(Glu): step 1/2. Functionally, catalyzes the NADPH-dependent reduction of glutamyl-tRNA(Glu) to glutamate 1-semialdehyde (GSA). The sequence is that of Glutamyl-tRNA reductase from Pseudomonas aeruginosa (strain ATCC 15692 / DSM 22644 / CIP 104116 / JCM 14847 / LMG 12228 / 1C / PRS 101 / PAO1).